The chain runs to 150 residues: MESSQATTKPTRGAGGRKGGDRKKSVSKSVKAGLQFPVGRIARYLKKGRYALRYGSGAPVYLAAVLEYLAAEVLELAGNAARDNKKNRINPRHLCLAIRNDEELGRLLHGVTIASGGVLPNINPVLLPKKSTASSSQAEKASATKSPKKA.

The segment covering 1-12 (MESSQATTKPTR) has biased composition (low complexity). 2 disordered regions span residues 1–28 (MESS…SVSK) and 130–150 (KSTA…PKKA). The span at 131 to 150 (STASSSQAEKASATKSPKKA) shows a compositional bias: polar residues. Ser-146 is modified (phosphoserine). The short motif at 146 to 149 (SPKK) is the SPKK motif element.

It belongs to the histone H2A family. As to quaternary structure, the nucleosome is a histone octamer containing two molecules each of H2A, H2B, H3 and H4 assembled in one H3-H4 heterotetramer and two H2A-H2B heterodimers. The octamer wraps approximately 147 bp of DNA. In terms of processing, not ubiquitinated.

The protein resides in the nucleus. It localises to the chromosome. Core component of nucleosome. Nucleosomes wrap and compact DNA into chromatin, limiting DNA accessibility to the cellular machineries which require DNA as a template. Histones thereby play a central role in transcription regulation, DNA repair, DNA replication and chromosomal stability. DNA accessibility is regulated via a complex set of post-translational modifications of histones, also called histone code, and nucleosome remodeling. In Arabidopsis thaliana (Mouse-ear cress), this protein is Probable histone H2A.5.